Reading from the N-terminus, the 247-residue chain is Ribosomal RNA small subunit methyltransferase G (247 aa).

The S-adenosyl-L-methionine site is built by G86, L91, and R154.

The protein belongs to the methyltransferase superfamily. RNA methyltransferase RsmG family.

It is found in the cytoplasm. Its function is as follows. Specifically methylates the N7 position of a guanine in 16S rRNA. The polypeptide is Ribosomal RNA small subunit methyltransferase G (Leptospira biflexa serovar Patoc (strain Patoc 1 / Ames)).